Reading from the N-terminus, the 103-residue chain is ATP synthase subunit H, mitochondrial (103 aa).

A mitochondrion-targeting transit peptide spans 1–26; sequence MSRILKSLSRSYSTTSPRLYVDVVQG.

It belongs to the ATPase h subunit family. In terms of assembly, F-type ATPases have 2 components, CF(1) - the catalytic core - and CF(0) - the membrane proton channel.

The protein localises to the mitochondrion. It is found in the mitochondrion inner membrane. In terms of biological role, mitochondrial membrane ATP synthase (F(1)F(0) ATP synthase or Complex V) produces ATP from ADP in the presence of a proton gradient across the membrane which is generated by electron transport complexes of the respiratory chain. F-type ATPases consist of two structural domains, F(1) - containing the extramembraneous catalytic core and F(0) - containing the membrane proton channel, linked together by a central stalk and a peripheral stalk. During catalysis, ATP synthesis in the catalytic domain of F(1) is coupled via a rotary mechanism of the central stalk subunits to proton translocation. Part of the complex F(0) domain. Minor subunit located with subunit a in the membrane. This is ATP synthase subunit H, mitochondrial (atp14) from Schizosaccharomyces pombe (strain 972 / ATCC 24843) (Fission yeast).